The sequence spans 316 residues: 4-hydroxy-3-methylbut-2-enyl diphosphate reductase (316 aa).

Cys-17 contacts [4Fe-4S] cluster. Positions 46 and 79 each coordinate (2E)-4-hydroxy-3-methylbut-2-enyl diphosphate. Residues His-46 and His-79 each coordinate dimethylallyl diphosphate. Isopentenyl diphosphate-binding residues include His-46 and His-79. Cys-101 serves as a coordination point for [4Fe-4S] cluster. His-129 serves as a coordination point for (2E)-4-hydroxy-3-methylbut-2-enyl diphosphate. His-129 serves as a coordination point for dimethylallyl diphosphate. His-129 contributes to the isopentenyl diphosphate binding site. Catalysis depends on Glu-131, which acts as the Proton donor. Thr-170 serves as a coordination point for (2E)-4-hydroxy-3-methylbut-2-enyl diphosphate. [4Fe-4S] cluster is bound at residue Cys-200. The (2E)-4-hydroxy-3-methylbut-2-enyl diphosphate site is built by Ser-228, Ser-229, Asn-230, and Ser-273. Dimethylallyl diphosphate is bound by residues Ser-228, Ser-229, Asn-230, and Ser-273. Isopentenyl diphosphate contacts are provided by Ser-228, Ser-229, Asn-230, and Ser-273.

This sequence belongs to the IspH family. It depends on [4Fe-4S] cluster as a cofactor.

The enzyme catalyses isopentenyl diphosphate + 2 oxidized [2Fe-2S]-[ferredoxin] + H2O = (2E)-4-hydroxy-3-methylbut-2-enyl diphosphate + 2 reduced [2Fe-2S]-[ferredoxin] + 2 H(+). It catalyses the reaction dimethylallyl diphosphate + 2 oxidized [2Fe-2S]-[ferredoxin] + H2O = (2E)-4-hydroxy-3-methylbut-2-enyl diphosphate + 2 reduced [2Fe-2S]-[ferredoxin] + 2 H(+). It functions in the pathway isoprenoid biosynthesis; dimethylallyl diphosphate biosynthesis; dimethylallyl diphosphate from (2E)-4-hydroxy-3-methylbutenyl diphosphate: step 1/1. It participates in isoprenoid biosynthesis; isopentenyl diphosphate biosynthesis via DXP pathway; isopentenyl diphosphate from 1-deoxy-D-xylulose 5-phosphate: step 6/6. Its function is as follows. Catalyzes the conversion of 1-hydroxy-2-methyl-2-(E)-butenyl 4-diphosphate (HMBPP) into a mixture of isopentenyl diphosphate (IPP) and dimethylallyl diphosphate (DMAPP). Acts in the terminal step of the DOXP/MEP pathway for isoprenoid precursor biosynthesis. This Ruegeria pomeroyi (strain ATCC 700808 / DSM 15171 / DSS-3) (Silicibacter pomeroyi) protein is 4-hydroxy-3-methylbut-2-enyl diphosphate reductase.